Reading from the N-terminus, the 430-residue chain is MGFIQVSRGTRDILPDEVIYWQYVEATARQLLHQAAYRELRTPIFEQTNLFERGIGEATDVVGKEMYTFQDRGDRSITLRPEGTAGAVRSFIENKLHAQGGVQRLWYIGPMFRYERPGAGRQRQFHQIGVEALGSQDPRADAEVIAIASQLLKSLGVPDWTLSLNSLGTAEDRQKYREALVTYLSQYKDDLDPDSQDRLQRNPLRILDSKDPKTKEIAQSAPNILDYLGTDSKQHFDRVQQLLTDLDIAYKLNPCLVRGLDYYTHTAFEFELEGLGNQATVCGGGRYDRLVSELGGPETPAVGWAIGMERLILLLQNAEITLNQSLDFYCVARGPEAEAQALLICQNLRENGFSVEMDLSGSAFGKQLKRANRSGALACLILGDTEACDRTVQLKWLASGEQESIAQADLRNLTSQLQSKLTAAKGNSST.

It belongs to the class-II aminoacyl-tRNA synthetase family. Homodimer.

Its subcellular location is the cytoplasm. It catalyses the reaction tRNA(His) + L-histidine + ATP = L-histidyl-tRNA(His) + AMP + diphosphate + H(+). This Acaryochloris marina (strain MBIC 11017) protein is Histidine--tRNA ligase.